A 448-amino-acid polypeptide reads, in one-letter code: DEAD-box ATP-dependent RNA helicase CshB (448 aa).

The Q motif signature appears at 4–32; the sequence is HPFEQFNLESSLIDAVKDLNFEKPTEIQN. A Helicase ATP-binding domain is found at 35-206; sequence IPRILKRTNL…NKYLSHPEYV (172 aa). 48-55 is a binding site for ATP; that stretch reads SQTGTGKS. Positions 154-157 match the DEAD box motif; the sequence is DEAD. A Helicase C-terminal domain is found at 236-386; it reads NLIDILNPYL…EVKAHNQRQA (151 aa). The segment covering 400-418 has biased composition (basic residues); that stretch reads NKVRSKIKNKVKPGYKKKF. The interval 400 to 448 is disordered; that stretch reads NKVRSKIKNKVKPGYKKKFKQEVEKMKRQERKQFSKQQNRQKRKQNKKG. The segment covering 419–432 has biased composition (basic and acidic residues); the sequence is KQEVEKMKRQERKQ. The span at 438–448 shows a compositional bias: basic residues; sequence NRQKRKQNKKG.

Belongs to the DEAD box helicase family. CshB subfamily.

The protein localises to the cytoplasm. The catalysed reaction is ATP + H2O = ADP + phosphate + H(+). Its function is as follows. Probable DEAD-box RNA helicase. May work in conjunction with the cold shock proteins to ensure proper initiation of transcription at low and optimal temperatures. This Staphylococcus aureus (strain NCTC 8325 / PS 47) protein is DEAD-box ATP-dependent RNA helicase CshB.